We begin with the raw amino-acid sequence, 150 residues long: Flagellar assembly factor FliW (150 aa).

This sequence belongs to the FliW family. In terms of assembly, interacts with translational regulator CsrA and flagellin(s).

Its subcellular location is the cytoplasm. In terms of biological role, acts as an anti-CsrA protein, binds CsrA and prevents it from repressing translation of its target genes, one of which is flagellin. Binds to flagellin and participates in the assembly of the flagellum. The polypeptide is Flagellar assembly factor FliW (Leptospira interrogans serogroup Icterohaemorrhagiae serovar copenhageni (strain Fiocruz L1-130)).